The chain runs to 222 residues: Adapter protein MecA (222 aa).

This sequence belongs to the MecA family. In terms of assembly, homodimer.

Enables the recognition and targeting of unfolded and aggregated proteins to the ClpC protease or to other proteins involved in proteolysis. This is Adapter protein MecA from Lysinibacillus sphaericus (strain C3-41).